The sequence spans 198 residues: Calcium channel flower (198 aa).

Helical transmembrane passes span 36–56 (LGIV…LSII), 67–89 (IIQM…VCIE), and 114–134 (AVPP…GLIF).

Belongs to the calcium channel flower family. As to quaternary structure, homomultimer. Associates with the dally/ magu complex.

It localises to the cell membrane. The protein resides in the cytoplasmic vesicle. It is found in the secretory vesicle. Its subcellular location is the synaptic vesicle membrane. The protein localises to the presynaptic cell membrane. It localises to the endosome. With respect to regulation, channel activity is inhibited by La(3+), which reduces Ca(2+) influx and thus inhibits it's function in promoting activity-dependent bulk endocytosis (ADBE) in response to high stimuli. In terms of biological role, transmembrane protein which mediates synaptic endocytosis, fitness-based cell culling, neuronal culling, morphogen gradient scaling, and calcium transport. Regulates synaptic endocytosis and hence couples exo- with endocytosis. Controls two major modes of synaptic vesicle (SV) endocytosis in the synaptic boutons of neuromuscular junctions (NMJs); Ca(2+) channel-independent Clathrin-mediated endocytosis (CME) in response to mild stimulation, and Ca(2+) channel-dependent activity-dependent bulk endocytosis (ADBE) in response to strong stimulation. Functions in ADBE and subsequent SV reformation from bulk endosomes by initiating Ca(2+) channel-dependent phosphatidylinositol 4,5-bisphosphate (PtdIns(4,5)P2) compartmentalization in synaptic boutons. There it acts at the periactive zone to provide the low Ca(2+) levels required to initiate Calcineurin activation and upregulate PtdIns(4,5)P2. Conversely PtdIns(4,5)P2 enhances fwe Ca(2+) channel-activity, establishing a positive feedback loop that induces PtdIns(4,5)P2 microdomain at the periactive zone. These microdomains trigger bulk membrane invagination (i.e. ADBE) by triggering actin polymerization while also promoting localization of fwe to bulk endosomes, thereby removing the ADBE trigger to reduce endocytosis and prevent excess membrane uptake. PtdIns(4,5)P2 then promotes SV reformation from the bulk endosomes, to coordinate ADBE and subsequent SV reformation. Different combinations of the flower isoforms at the cell membrane are also required for the identification and elimination of suboptimal or supernumerary cells during development, regeneration, and adulthood. Required for the recognition and elimination of unfit cells in the developing wing during cell competition. In the developing pupal retina, mediates the elimination of unwanted postmitotic neurons, including supernumerary photoreceptor neurons that form at the periphery of the retina and are contained within incomplete ommatidia units. Also required for efficient elimination and replacement of old neurons by newly generated neurons during regeneration in the adult brain following mechanical injury. Downstream of the flower fitness fingerprints, cells identified as unwanted or unfit are eliminated via apoptosis through the expression of ahuizotl (azot). However, the cells marked for elimination by the flower isoforms only undergo apoptosis if additional thresholds are met; (1) their neighboring fit/healthy cells express different levels of the fwe isoforms, and (2) the levels of the protective signal SPARC expressed by the loser or unwanted cells are unable to inhibit caspase activation. These additional thresholds for flower-mediated apoptosis, allows useful cells to recover from transient and limited stress before they are unnecessarily eliminated. Functions with dally and magu in a mechanism of scaling, which utilises apoptosis to ensure that the dpp morphogen gradient, which mediates organ growth, remains proportional to the size of the growing wing. In this mechanism, fwe represses dally- and Magu-dependent activity in expanding the gradient, and dally/Magu inhibits fwe-dependent apoptosis to keep cell death rate low. When the levels of these different proteins are optimally regulated the gradient correctly scales with organ growth but when this fails, fwe-mediated apoptosis is activated to trim the developing tissue to match the correct size of the gradient. The chain is Calcium channel flower from Drosophila persimilis (Fruit fly).